The sequence spans 491 residues: Ketol-acid reductoisomerase (NADP(+)) (491 aa).

The KARI N-terminal Rossmann domain maps to 15–208; sequence AQLGKCRFMG…GGHRAGVLES (194 aa). NADP(+) contacts are provided by residues 45–48, arginine 68, arginine 76, serine 78, and 108–110; these read CGAQ and DKQ. Residue histidine 132 is part of the active site. Glycine 158 is an NADP(+) binding site. KARI C-terminal knotted domains lie at 209 to 344 and 345 to 484; these read SFVA…TAPQ and YEGK…MTDM. Mg(2+) contacts are provided by aspartate 217, glutamate 221, glutamate 389, and glutamate 393. Serine 414 lines the substrate pocket.

Belongs to the ketol-acid reductoisomerase family. Mg(2+) is required as a cofactor.

It catalyses the reaction (2R)-2,3-dihydroxy-3-methylbutanoate + NADP(+) = (2S)-2-acetolactate + NADPH + H(+). The enzyme catalyses (2R,3R)-2,3-dihydroxy-3-methylpentanoate + NADP(+) = (S)-2-ethyl-2-hydroxy-3-oxobutanoate + NADPH + H(+). The protein operates within amino-acid biosynthesis; L-isoleucine biosynthesis; L-isoleucine from 2-oxobutanoate: step 2/4. Its pathway is amino-acid biosynthesis; L-valine biosynthesis; L-valine from pyruvate: step 2/4. Functionally, involved in the biosynthesis of branched-chain amino acids (BCAA). Catalyzes an alkyl-migration followed by a ketol-acid reduction of (S)-2-acetolactate (S2AL) to yield (R)-2,3-dihydroxy-isovalerate. In the isomerase reaction, S2AL is rearranged via a Mg-dependent methyl migration to produce 3-hydroxy-3-methyl-2-ketobutyrate (HMKB). In the reductase reaction, this 2-ketoacid undergoes a metal-dependent reduction by NADPH to yield (R)-2,3-dihydroxy-isovalerate. The sequence is that of Ketol-acid reductoisomerase (NADP(+)) from Salmonella arizonae (strain ATCC BAA-731 / CDC346-86 / RSK2980).